The chain runs to 720 residues: Fatty acid CoA ligase Acsl3 (720 aa).

The helical; Signal-anchor for type III membrane protein transmembrane segment at 21 to 41 (ILLYFIHFIISLYTILTYIPF) threads the bilayer. At 42–720 (YFLCESKQEK…ADIERMYGRK (679 aa)) the chain is on the cytoplasmic side. A Phosphoserine modification is found at S683.

This sequence belongs to the ATP-dependent AMP-binding enzyme family. Mg(2+) is required as a cofactor. In terms of tissue distribution, predominantly expressed in the brain, and to a much lesser extent, in lung, adrenal gland, kidney, small intestine, and adipose tissue but not detected in heart or liver.

It is found in the mitochondrion outer membrane. Its subcellular location is the peroxisome membrane. The protein resides in the microsome membrane. The protein localises to the endoplasmic reticulum membrane. The enzyme catalyses a long-chain fatty acid + ATP + CoA = a long-chain fatty acyl-CoA + AMP + diphosphate. It catalyses the reaction (5Z,8Z,11Z,14Z)-eicosatetraenoate + ATP + CoA = (5Z,8Z,11Z,14Z)-eicosatetraenoyl-CoA + AMP + diphosphate. The catalysed reaction is a medium-chain fatty acid + ATP + CoA = a medium-chain fatty acyl-CoA + AMP + diphosphate. It carries out the reaction 15-hydroxy-(5Z,8Z,11Z,13E)-eicosatetraenoate + ATP + CoA = 15-hydroxy-(5Z,8Z,11Z,13E)-eicosatetraenoyl-CoA + AMP + diphosphate. The enzyme catalyses 12-hydroxy-(5Z,8Z,10E,14Z)-eicosatetraenoate + ATP + CoA = 12-hydroxy-(5Z,8Z,10E,14Z)-eicosatetraenoyl-CoA + AMP + diphosphate. It catalyses the reaction 5-hydroxy-(6E,8Z,11Z,14Z)-eicosatetraenoate + ATP + CoA = 5-hydroxy-(6E,8Z,11Z,14Z)-eicosatetraenoyl-CoA + AMP + diphosphate. The catalysed reaction is 14,15-epoxy-(5Z,8Z,11Z)-eicosatrienoate + ATP + CoA = 14,15-epoxy-(5Z,8Z,11Z)-eicosatrienoyl-CoA + AMP + diphosphate. It carries out the reaction 11,12-epoxy-(5Z,8Z,14Z)-eicosatrienoate + ATP + CoA = 11,12-epoxy-(5Z,8Z,14Z)-eicosatrienoyl-CoA + AMP + diphosphate. The enzyme catalyses (E)-hexadec-2-enoate + ATP + CoA = (2E)-hexadecenoyl-CoA + AMP + diphosphate. It catalyses the reaction hexadecanoate + ATP + CoA = hexadecanoyl-CoA + AMP + diphosphate. The catalysed reaction is tetradecanoate + ATP + CoA = tetradecanoyl-CoA + AMP + diphosphate. It carries out the reaction dodecanoate + ATP + CoA = dodecanoyl-CoA + AMP + diphosphate. The enzyme catalyses octadecanoate + ATP + CoA = octadecanoyl-CoA + AMP + diphosphate. It catalyses the reaction eicosanoate + ATP + CoA = eicosanoyl-CoA + AMP + diphosphate. The catalysed reaction is (9Z)-octadecenoate + ATP + CoA = (9Z)-octadecenoyl-CoA + AMP + diphosphate. It carries out the reaction (9Z)-hexadecenoate + ATP + CoA = (9Z)-hexadecenoyl-CoA + AMP + diphosphate. The enzyme catalyses (9Z,12Z)-octadecadienoate + ATP + CoA = (9Z,12Z)-octadecadienoyl-CoA + AMP + diphosphate. It catalyses the reaction (9Z,12Z,15Z)-octadecatrienoate + ATP + CoA = (9Z,12Z,15Z)-octadecatrienoyl-CoA + AMP + diphosphate. The catalysed reaction is (4Z,7Z,10Z,13Z,16Z,19Z)-docosahexaenoate + ATP + CoA = (4Z,7Z,10Z,13Z,16Z,19Z)-docosahexaenoyl-CoA + AMP + diphosphate. It carries out the reaction (5Z,8Z,11Z,14Z,17Z)-eicosapentaenoate + ATP + CoA = (5Z,8Z,11Z,14Z,17Z)-eicosapentaenoyl-CoA + AMP + diphosphate. The enzyme catalyses a fatty acid + ATP + CoA = a fatty acyl-CoA + AMP + diphosphate. Catalyzes the conversion of long-chain fatty acids to their active form acyl-CoA for both synthesis of cellular lipids, and degradation via beta-oxidation. ACSL3 is required for the incorporation of fatty acids into phosphatidylcholine, the major phospholipid located on the surface of VLDL (very low density lipoproteins). Has mainly an anabolic role in energy metabolism. Mediates hepatic lipogenesis. Preferentially uses myristate, laurate, arachidonate and eicosapentaenoate as substrates. Both isoforms exhibit the same level of activity. The polypeptide is Fatty acid CoA ligase Acsl3 (Rattus norvegicus (Rat)).